Consider the following 337-residue polypeptide: MMSNYGNMMDSPKSSPHGGGRSPVVARQDSSGTLKTTISLGKTPTIIHTGPFYSMKEPPAKAELTGDKDLMTEYGLHHTLTKFKEKKFKESLASFLQNIPGINDLITHPVENSTLRSVIEKPPIGGKELLPLTPVQLAGFRLHPGPLPEQYRTTYVTPARKHKNKHKKQKHKDGVTTGQESTLLDSAGLETYEKKHKKQKRHEDDKERKKRKKEKKRKKKNQSPEPGVGLLPGGASLGGAAGVMGATSLGSLGGGPGGPGLSSLSASMGPGVVGNMNSFSSSMQMQQQQQMPMQQQQMSSGGLLGSVLGTSGGPGGGGGGGGGGGGGVGGSLLMSQF.

3 disordered regions span residues 1–38 (MMSN…KTTI), 155–234 (YVTP…LPGG), and 297–337 (QMSS…MSQF). Positions 28 to 38 (QDSSGTLKTTI) are enriched in polar residues. Basic residues-rich tracts occupy residues 159 to 171 (ARKH…KQKH) and 208 to 221 (RKKR…KKKN). Residues 189–223 (LETYEKKHKKQKRHEDDKERKKRKKEKKRKKKNQS) are a coiled coil. Low complexity predominate over residues 297–309 (QMSSGGLLGSVLG). Over residues 310–330 (TSGGPGGGGGGGGGGGGGVGG) the composition is skewed to gly residues.

This sequence belongs to the Mediator complex subunit 19 family. In terms of assembly, component of the Mediator complex.

It is found in the nucleus. In terms of biological role, component of the Mediator complex, a coactivator involved in the regulated transcription of nearly all RNA polymerase II-dependent genes. Mediator functions as a bridge to convey information from gene-specific regulatory proteins to the basal RNA polymerase II transcription machinery. Mediator is recruited to promoters by direct interactions with regulatory proteins and serves as a scaffold for the assembly of a functional preinitiation complex with RNA polymerase II and the general transcription factors. The protein is Mediator of RNA polymerase II transcription subunit 19 (MED19) of Drosophila melanogaster (Fruit fly).